The following is a 255-amino-acid chain: Pre-miRNA 5'-monophosphate methyltransferase (255 aa).

Residues Arg-32, Asn-66, Asp-96, 121 to 122, and Met-150 each bind S-adenosyl-L-methionine; that span reads DI. Positions 41-253 constitute a Bin3-type SAM domain; it reads LHKLFRKPAE…SLLLFKIQRH (213 aa).

It belongs to the methyltransferase superfamily.

It localises to the cytoplasm. The enzyme catalyses a 5'-end 5'-phospho-ribonucleoside-RNA + S-adenosyl-L-methionine = a 5'-end (5'-methylphospho)-ribonucleoside-RNA + S-adenosyl-L-homocysteine. The catalysed reaction is a 5'-end 5'-phospho-ribonucleoside-RNA + 2 S-adenosyl-L-methionine = a 5'-end (5'-bismethylphospho)-ribonucleoside-RNA + 2 S-adenosyl-L-homocysteine. O-methyltransferase that specifically monomethylates 5'-monophosphate of cytoplasmic histidyl tRNA (tRNA(His)), acting as a capping enzyme by protecting tRNA(His) from cleavage by DICER1. Also able, with less efficiently, to methylate the 5' monophosphate of a subset of pre-miRNAs, acting as a negative regulator of miRNA processing. The 5' monophosphate of pre-miRNAs is recognized by DICER1 and is required for pre-miRNAs processing: methylation at this position reduces the processing of pre-miRNAs by DICER1. Was also reported to mediate dimethylation of pre-miR-145; however dimethylation cannot be reproduced by another group which observes a monomethylation of pre-miR-145. This Xenopus laevis (African clawed frog) protein is Pre-miRNA 5'-monophosphate methyltransferase (bcdin3d).